A 158-amino-acid chain; its full sequence is Transcription factor BTF3 homolog 4 (158 aa).

One can recognise an NAC-A/B domain in the interval 33 to 98 (TADDKKLQSS…AEVKQITEML (66 aa)). The tract at residues 123-158 (QVLDSKASKPEDIEEEDDDVPELVGNFDEASKNEAN) is disordered. A compositionally biased stretch (acidic residues) spans 134 to 143 (DIEEEDDDVP).

This sequence belongs to the NAC-beta family.

This Xenopus laevis (African clawed frog) protein is Transcription factor BTF3 homolog 4 (btf3l4).